Here is a 121-residue protein sequence, read N- to C-terminus: Ribonuclease P protein component (121 aa).

It belongs to the RnpA family. In terms of assembly, consists of a catalytic RNA component (M1 or rnpB) and a protein subunit.

It carries out the reaction Endonucleolytic cleavage of RNA, removing 5'-extranucleotides from tRNA precursor.. Its function is as follows. RNaseP catalyzes the removal of the 5'-leader sequence from pre-tRNA to produce the mature 5'-terminus. It can also cleave other RNA substrates such as 4.5S RNA. The protein component plays an auxiliary but essential role in vivo by binding to the 5'-leader sequence and broadening the substrate specificity of the ribozyme. This is Ribonuclease P protein component from Oceanobacillus iheyensis (strain DSM 14371 / CIP 107618 / JCM 11309 / KCTC 3954 / HTE831).